Reading from the N-terminus, the 78-residue chain is Putative defensin-like protein 202 (78 aa).

The N-terminal stretch at 1-29 is a signal peptide; it reads MAKTQNFVCFTAVLLILILVSTEIPMIEG. 3 disulfide bridges follow: Cys-44-Cys-65, Cys-49-Cys-74, and Cys-53-Cys-76.

Belongs to the DEFL family.

The protein resides in the secreted. This chain is Putative defensin-like protein 202, found in Arabidopsis thaliana (Mouse-ear cress).